A 273-amino-acid chain; its full sequence is LDMGHMVNAIGQIDEFVNLGANSIETDVSFDSSANPEYTYHGIPCDCGRNCKKWENFNDFLKGLRSATTPGNSKYKEKLVLVVFDLKTGSLYDNQANDAGKKLAKNLLQHYWNNGNNGGRAYIVLSIPDLNHYPLIKGFTDTLKQEGHPELLDKLGYDFSGNDAIGDVAKAYKKAGVSGHVWQSDGITNCLLRGLTRVKEAVANRDSGNGYINKVYYWTVDKRATTRDALDAGVDGIMTNYPDVITDVLNEAAYKSKFRVATYEDNPWETFKK.

H5 is an active-site residue. E25 and D27 together coordinate Mg(2+). H41 functions as the Nucleophile in the catalytic mechanism. Intrachain disulfides connect C45–C51 and C47–C190. D85 contributes to the Mg(2+) binding site.

Belongs to the arthropod phospholipase D family. Class II subfamily. It depends on Mg(2+) as a cofactor. In terms of tissue distribution, expressed by the venom gland.

It is found in the secreted. It carries out the reaction an N-(acyl)-sphingosylphosphocholine = an N-(acyl)-sphingosyl-1,3-cyclic phosphate + choline. The enzyme catalyses an N-(acyl)-sphingosylphosphoethanolamine = an N-(acyl)-sphingosyl-1,3-cyclic phosphate + ethanolamine. The catalysed reaction is a 1-acyl-sn-glycero-3-phosphocholine = a 1-acyl-sn-glycero-2,3-cyclic phosphate + choline. It catalyses the reaction a 1-acyl-sn-glycero-3-phosphoethanolamine = a 1-acyl-sn-glycero-2,3-cyclic phosphate + ethanolamine. Functionally, dermonecrotic toxins cleave the phosphodiester linkage between the phosphate and headgroup of certain phospholipids (sphingolipid and lysolipid substrates), forming an alcohol (often choline) and a cyclic phosphate. This toxin acts on sphingomyelin (SM). It may also act on ceramide phosphoethanolamine (CPE), lysophosphatidylcholine (LPC) and lysophosphatidylethanolamine (LPE), but not on lysophosphatidylserine (LPS), and lysophosphatidylglycerol (LPG). It acts by transphosphatidylation, releasing exclusively cyclic phosphate products as second products. Induces dermonecrosis, hemolysis, increased vascular permeability, edema, inflammatory response, and platelet aggregation. This is Dermonecrotic toxin LhSicTox-alphaIA1i from Loxosceles hirsuta (Recluse spider).